The chain runs to 563 residues: Urocanate hydratase (563 aa).

NAD(+) contacts are provided by residues 53-54 (GG), Gln131, 177-179 (GMG), Glu197, Arg202, 243-244 (NA), 264-268 (QTSAH), 274-275 (YL), and Tyr323. Residue Cys411 is part of the active site. Gly493 lines the NAD(+) pocket.

It belongs to the urocanase family. Requires NAD(+) as cofactor.

Its subcellular location is the cytoplasm. The catalysed reaction is 4-imidazolone-5-propanoate = trans-urocanate + H2O. It participates in amino-acid degradation; L-histidine degradation into L-glutamate; N-formimidoyl-L-glutamate from L-histidine: step 2/3. Functionally, catalyzes the conversion of urocanate to 4-imidazolone-5-propionate. In Yersinia enterocolitica serotype O:8 / biotype 1B (strain NCTC 13174 / 8081), this protein is Urocanate hydratase.